A 568-amino-acid polypeptide reads, in one-letter code: Keratin, type I cytoskeletal 10 (568 aa).

The segment covering 1-15 (MSVRYSSSKQYSSSR) has biased composition (low complexity). Residues 1 to 31 (MSVRYSSSKQYSSSRSGGGGGGGGGSSFRIS) are disordered. Residues 1–135 (MSVRYSSSKQ…GGDGGLLSGN (135 aa)) are head. Phosphoserine occurs at positions 14, 16, 36, 47, 50, and 160. The segment covering 16 to 26 (SGGGGGGGGGS) has biased composition (gly residues). The interval 136–171 (EKVTMQNLNDRLASYLDKVRALEESNYELEGKIKEW) is coil 1A. Residues 136–450 (EKVTMQNLND…SLLEGEGSSG (315 aa)) enclose the IF rod domain. A linker 1 region spans residues 172–192 (YEKHGNSSQRAPRDYSKYYQT). Positions 193–284 (IEDLKNQILN…KNHEEEMRDL (92 aa)) are coil 1B. The interval 285–307 (QNVSTGDVNVEMNAAPGVDLTEL) is linker 12. The coil 2 stretch occupies residues 308 to 446 (LNNMRNQYEQ…QTYRSLLEGE (139 aa)). The interval 447 to 568 (GSSGGGGYGG…GESSSKGPRY (122 aa)) is tail. The span at 485-546 (GGGSSGGGGH…GGGYGGGSSS (62 aa)) shows a compositional bias: gly residues. The tract at residues 485 to 568 (GGGSSGGGGH…GESSSKGPRY (84 aa)) is disordered. A compositionally biased stretch (low complexity) spans 547-568 (SGGHKSSSSGSVGESSSKGPRY).

Belongs to the intermediate filament family. In terms of assembly, heterotetramer of two type I and two type II keratins. Heterodimer with KRT1. Two heterodimers of KRT1 and KRT10 form a heterotetramer. The KRT10 subunit in the heterotetramer is probably disulfide-linked. In terms of tissue distribution, expressed in skin.

The protein localises to the secreted. It localises to the extracellular space. It is found in the cell surface. Its subcellular location is the cytoplasm. In terms of biological role, plays a role in the establishment of the epidermal barrier on plantar skin. Involved in the maintenance of cell layer development and keratin filament bundles in suprabasal cells of the epithelium. The polypeptide is Keratin, type I cytoskeletal 10 (Canis lupus familiaris (Dog)).